The sequence spans 382 residues: Protein MGF 360-4L (382 aa).

This sequence belongs to the asfivirus MGF 360 family.

Functionally, plays a role in virus cell tropism, and may be required for efficient virus replication in macrophages. This chain is Protein MGF 360-4L, found in Ornithodoros (relapsing fever ticks).